The sequence spans 442 residues: Na(+)/H(+) antiporter NhaA (442 aa).

11 helical membrane passes run 32–52 (IGGG…NSPW), 73–93 (LTLA…VAGL), 111–131 (AVPV…YALV), 139–159 (AGWA…LAVI), 170–190 (FLLT…AVVY), 193–213 (HLSI…TLLV), 234–254 (VHAS…AVPV), 284–304 (VAVP…LSGL), 316–336 (VVLG…FLVA), 352–372 (VLGL…IGEL), and 383–403 (HVKI…AVVL). A compositionally biased stretch (basic and acidic residues) spans 423-435 (HDGIPDVYQDLHR). The interval 423 to 442 (HDGIPDVYQDLHRSSPRPWG) is disordered.

Belongs to the NhaA Na(+)/H(+) (TC 2.A.33) antiporter family.

It localises to the cell membrane. The catalysed reaction is Na(+)(in) + 2 H(+)(out) = Na(+)(out) + 2 H(+)(in). Functionally, na(+)/H(+) antiporter that extrudes sodium in exchange for external protons. This is Na(+)/H(+) antiporter NhaA from Frankia casuarinae (strain DSM 45818 / CECT 9043 / HFP020203 / CcI3).